The sequence spans 477 residues: Aspartyl/glutamyl-tRNA(Asn/Gln) amidotransferase subunit B (477 aa).

It belongs to the GatB/GatE family. GatB subfamily. Heterotrimer of A, B and C subunits.

The enzyme catalyses L-glutamyl-tRNA(Gln) + L-glutamine + ATP + H2O = L-glutaminyl-tRNA(Gln) + L-glutamate + ADP + phosphate + H(+). It catalyses the reaction L-aspartyl-tRNA(Asn) + L-glutamine + ATP + H2O = L-asparaginyl-tRNA(Asn) + L-glutamate + ADP + phosphate + 2 H(+). Functionally, allows the formation of correctly charged Asn-tRNA(Asn) or Gln-tRNA(Gln) through the transamidation of misacylated Asp-tRNA(Asn) or Glu-tRNA(Gln) in organisms which lack either or both of asparaginyl-tRNA or glutaminyl-tRNA synthetases. The reaction takes place in the presence of glutamine and ATP through an activated phospho-Asp-tRNA(Asn) or phospho-Glu-tRNA(Gln). In Legionella pneumophila (strain Lens), this protein is Aspartyl/glutamyl-tRNA(Asn/Gln) amidotransferase subunit B.